A 1486-amino-acid chain; its full sequence is Chromosome partition protein MukB (1486 aa).

An ATP-binding site is contributed by 34 to 41; sequence GGNGAGKS. 3 coiled-coil regions span residues 326–418, 444–480, and 509–603; these read LEAD…QYNQ, LETF…QAYQ, and RHLA…RAPV. Residues 666–783 form a flexible hinge region; it reads PGGSEDQRLN…EVPLFGRAAR (118 aa). Coiled coils occupy residues 835-923, 977-1115, and 1209-1266; these read EAEI…AKLE, EMLS…TAKA, and VEAI…QNVS.

It belongs to the SMC family. MukB subfamily. As to quaternary structure, homodimerization via its hinge domain. Binds to DNA via its C-terminal region. Interacts, and probably forms a ternary complex, with MukE and MukF via its C-terminal region. The complex formation is stimulated by calcium or magnesium. Interacts with tubulin-related protein FtsZ.

The protein resides in the cytoplasm. The protein localises to the nucleoid. Its function is as follows. Plays a central role in chromosome condensation, segregation and cell cycle progression. Functions as a homodimer, which is essential for chromosome partition. Involved in negative DNA supercoiling in vivo, and by this means organize and compact chromosomes. May achieve or facilitate chromosome segregation by condensation DNA from both sides of a centrally located replisome during cell division. The polypeptide is Chromosome partition protein MukB (Escherichia coli O127:H6 (strain E2348/69 / EPEC)).